A 977-amino-acid chain; its full sequence is Fc receptor-like protein 5 (977 aa).

The N-terminal stretch at 1 to 15 (MLLWVILLVLAPVSG) is a signal peptide. Topologically, residues 16–851 (QFARTPRPII…ANRSGPFATG (836 aa)) are extracellular. 8 consecutive Ig-like C2-type domains span residues 23-101 (PIIF…LDFS), 188-271 (PFTR…SVIS), 287-374 (PVLT…LSVT), 380-463 (PVLN…KAVS), 473-556 (PVLT…EVVS), 566-651 (PILT…ISLS), 659-744 (PILT…VTLK), and 752-834 (PVLT…ETVT). Disulfide bonds link Cys-44–Cys-85, Cys-211–Cys-260, and Cys-308–Cys-355. Asn-383 carries N-linked (GlcNAc...) asparagine glycosylation. Cystine bridges form between Cys-401–Cys-448, Cys-494–Cys-541, Cys-587–Cys-634, Cys-680–Cys-727, and Cys-773–Cys-819. The chain crosses the membrane as a helical span at residues 852–872 (VAGGLLSIAGLAAGALLLYCW). Over 873 to 977 (LSRKAGRKPA…LFLASSAPHR (105 aa)) the chain is Cytoplasmic. The tract at residues 879-898 (RKPASDPARSPSDSDSQEPT) is disordered. Residues 883–892 (SDPARSPSDS) show a composition bias toward low complexity. 4 short sequence motifs (ITIM motif) span residues 897–902 (PTYHNV), 910–915 (PVYTNA), 922–927 (VVYSEV), and 952–957 (IIYSEV).

As to quaternary structure, interacts with CR2. Interacts with CD19. Expressed in marginal zone B-cells, immunoblasts, tonsillar germinal center centrocytes and in the intraepithelial and interfollicular regions of the tonsil. Expressed in many lymphoma cell lines and on hairy cell leukemia cells. Isoform 1, isoform 3, isoform 4 and isoform 5 are detected in lymph node, spleen, bone marrow, and small intestine with preponderance of isoform 3. Expressed in mature and memory B-cells and down-regulated in germinal center cells (at protein level).

Its subcellular location is the cell membrane. Plays an important role in B-cell response to antigen that acts both as a negative or positive coreceptor. Inhibits B-cell receptor (BCR) signaling in the absence of CR2 stimulation but engagement with CR2 and the BCR lead to a superior calcium response compared to CR2 and BCR costimulation. May be involved in B-cell development and differentiation in peripheral lymphoid organs and may be useful markers of B-cell stages. May have an immunoregulatory role in marginal zone B-cells. May play a role in fertilization. This Homo sapiens (Human) protein is Fc receptor-like protein 5 (FCRL5).